The following is a 37-amino-acid chain: Large ribosomal subunit protein bL36 (37 aa).

This sequence belongs to the bacterial ribosomal protein bL36 family.

The protein is Large ribosomal subunit protein bL36 of Acidothermus cellulolyticus (strain ATCC 43068 / DSM 8971 / 11B).